A 605-amino-acid polypeptide reads, in one-letter code: MALRKGGLALALLLLSWVALGPRSLEGADPGTPGEAEGPACPAACVCSYDDDADELSVFCSSRNLTRLPDGVPGGTQALWLDGNNLSSVPPAAFQNLSSLGFLNLQGGQLGSLEPQALLGLENLCHLHLERNQLRSLALGTFAHTPALASLGLSNNRLSRLEDGLFEGLGSLWDLNLGWNSLAVLPDAAFRGLGSLRELVLAGNRLAYLQPALFSGLAELRELDLSRNALRAIKANVFVQLPRLQKLYLDRNLIAAVAPGAFLGLKALRWLDLSHNRVAGLLEDTFPGLLGLRVLRLSHNAIASLRPRTFKDLHFLEELQLGHNRIRQLAERSFEGLGQLEVLTLDHNQLQEVKAGAFLGLTNVAVMNLSGNCLRNLPEQVFRGLGKLHSLHLEGSCLGRIRPHTFTGLSGLRRLFLKDNGLVGIEEQSLWGLAELLELDLTSNQLTHLPHRLFQGLGKLEYLLLSRNRLAELPADALGPLQRAFWLDVSHNRLEALPNSLLAPLGRLRYLSLRNNSLRTFTPQPPGLERLWLEGNPWDCGCPLKALRDFALQNPSAVPRFVQAICEGDDCQPPAYTYNNITCASPPEVVGLDLRDLSEAHFAPC.

Residues 1 to 27 form the signal peptide; that stretch reads MALRKGGLALALLLLSWVALGPRSLEG. The LRRNT domain maps to 32-74; that stretch reads TPGEAEGPACPAACVCSYDDDADELSVFCSSRNLTRLPDGVPG. Disulfide bonds link Cys41/Cys47 and Cys45/Cys60. 3 N-linked (GlcNAc...) asparagine glycosylation sites follow: Asn64, Asn85, and Asn96. 19 LRR repeats span residues 75 to 96, 99 to 120, 123 to 144, 147 to 168, 171 to 192, 195 to 216, 219 to 240, 243 to 264, 267 to 288, 291 to 312, 315 to 336, 339 to 360, 363 to 384, 387 to 408, 411 to 432, 435 to 456, 459 to 480, 483 to 504, and 507 to 528; these read GTQALWLDGNNLSSVPPAAFQN, SLGFLNLQGGQLGSLEPQALLG, NLCHLHLERNQLRSLALGTFAH, ALASLGLSNNRLSRLEDGLFEG, SLWDLNLGWNSLAVLPDAAFRG, SLRELVLAGNRLAYLQPALFSG, ELRELDLSRNALRAIKANVFVQ, RLQKLYLDRNLIAAVAPGAFLG, ALRWLDLSHNRVAGLLEDTFPG, GLRVLRLSHNAIASLRPRTFKD, FLEELQLGHNRIRQLAERSFEG, QLEVLTLDHNQLQEVKAGAFLG, NVAVMNLSGNCLRNLPEQVFRG, KLHSLHLEGSCLGRIRPHTFTG, GLRRLFLKDNGLVGIEEQSLWG, ELLELDLTSNQLTHLPHRLFQG, KLEYLLLSRNRLAELPADALGP, RAFWLDVSHNRLEALPNSLLAP, and RLRYLSLRNNSLRTFTPQPPGL. Asn368 is a glycosylation site (N-linked (GlcNAc...) asparagine). N-linked (GlcNAc...) asparagine glycosylation is present at Asn515. The LRRCT domain maps to 536-605; sequence NPWDCGCPLK…DLSEAHFAPC (70 aa). Cystine bridges form between Cys540/Cys583, Cys542/Cys605, and Cys566/Cys571. An N-linked (GlcNAc...) asparagine glycan is attached at Asn580.

As to quaternary structure, forms a ternary complex with IGF1 and IGFBP3. In terms of tissue distribution, plasma.

It localises to the secreted. The protein resides in the extracellular space. Its function is as follows. Involved in protein-protein interactions that result in protein complexes, receptor-ligand binding or cell adhesion. The protein is Insulin-like growth factor-binding protein complex acid labile subunit (IGFALS) of Homo sapiens (Human).